The following is a 254-amino-acid chain: 3-dehydroquinate dehydratase (254 aa).

Residues 47 to 49 and R83 contribute to the 3-dehydroquinate site; that span reads EFR. H144 functions as the Proton donor/acceptor in the catalytic mechanism. K171 functions as the Schiff-base intermediate with substrate in the catalytic mechanism. 3-dehydroquinate-binding residues include R213, S232, and Q236.

This sequence belongs to the type-I 3-dehydroquinase family. In terms of assembly, homodimer.

It carries out the reaction 3-dehydroquinate = 3-dehydroshikimate + H2O. It functions in the pathway metabolic intermediate biosynthesis; chorismate biosynthesis; chorismate from D-erythrose 4-phosphate and phosphoenolpyruvate: step 3/7. Involved in the third step of the chorismate pathway, which leads to the biosynthesis of aromatic amino acids. Catalyzes the cis-dehydration of 3-dehydroquinate (DHQ) and introduces the first double bond of the aromatic ring to yield 3-dehydroshikimate. The polypeptide is 3-dehydroquinate dehydratase (Neisseria gonorrhoeae (strain ATCC 700825 / FA 1090)).